A 208-amino-acid chain; its full sequence is MARYTDASCRLCRREGEKLFLKGERCYTDKCSVARRPYAPGQHGQGRKKMSEYGIQLREKAKVRRFYGVLEGQFSKYFEVASRRKGITGENLLQILETRLDNVVYRLGLGTSRPESRQLVTHGHFTVNGKRVNIPSYLIKVGDVIAVADNSKNSPKVKSIREIAGGKVIPKWLEFDEENLVGKVVALPAREDIDLPIKEHLIVELYSK.

The region spanning 98–164 (TRLDNVVYRL…PKVKSIREIA (67 aa)) is the S4 RNA-binding domain.

It belongs to the universal ribosomal protein uS4 family. Part of the 30S ribosomal subunit. Contacts protein S5. The interaction surface between S4 and S5 is involved in control of translational fidelity.

Functionally, one of the primary rRNA binding proteins, it binds directly to 16S rRNA where it nucleates assembly of the body of the 30S subunit. With S5 and S12 plays an important role in translational accuracy. This Ruminiclostridium cellulolyticum (strain ATCC 35319 / DSM 5812 / JCM 6584 / H10) (Clostridium cellulolyticum) protein is Small ribosomal subunit protein uS4.